Consider the following 940-residue polypeptide: Alanine--tRNA ligase (940 aa).

Zn(2+) is bound by residues histidine 581, histidine 585, cysteine 683, and histidine 687.

Belongs to the class-II aminoacyl-tRNA synthetase family. Requires Zn(2+) as cofactor.

It is found in the cytoplasm. It carries out the reaction tRNA(Ala) + L-alanine + ATP = L-alanyl-tRNA(Ala) + AMP + diphosphate. Functionally, catalyzes the attachment of alanine to tRNA(Ala) in a two-step reaction: alanine is first activated by ATP to form Ala-AMP and then transferred to the acceptor end of tRNA(Ala). Also edits incorrectly charged Ser-tRNA(Ala) and Gly-tRNA(Ala) via its editing domain. The sequence is that of Alanine--tRNA ligase from Leptospira borgpetersenii serovar Hardjo-bovis (strain JB197).